The primary structure comprises 118 residues: Ribonuclease P protein component (118 aa).

The protein belongs to the RnpA family. In terms of assembly, consists of a catalytic RNA component (M1 or rnpB) and a protein subunit.

The enzyme catalyses Endonucleolytic cleavage of RNA, removing 5'-extranucleotides from tRNA precursor.. RNaseP catalyzes the removal of the 5'-leader sequence from pre-tRNA to produce the mature 5'-terminus. It can also cleave other RNA substrates such as 4.5S RNA. The protein component plays an auxiliary but essential role in vivo by binding to the 5'-leader sequence and broadening the substrate specificity of the ribozyme. This is Ribonuclease P protein component from Vibrio campbellii (strain ATCC BAA-1116).